The following is a 341-amino-acid chain: L-threonine 3-dehydrogenase (341 aa).

Cys-38 contributes to the Zn(2+) binding site. Catalysis depends on charge relay system residues Thr-40 and His-43. The Zn(2+) site is built by His-63, Glu-64, Cys-93, Cys-96, Cys-99, and Cys-107. Residues Ile-175, Asp-195, Arg-200, Leu-262–Ile-264, and Ile-286–Tyr-287 each bind NAD(+).

It belongs to the zinc-containing alcohol dehydrogenase family. Homotetramer. Requires Zn(2+) as cofactor.

It localises to the cytoplasm. It catalyses the reaction L-threonine + NAD(+) = (2S)-2-amino-3-oxobutanoate + NADH + H(+). It functions in the pathway amino-acid degradation; L-threonine degradation via oxydo-reductase pathway; glycine from L-threonine: step 1/2. In terms of biological role, catalyzes the NAD(+)-dependent oxidation of L-threonine to 2-amino-3-ketobutyrate. The polypeptide is L-threonine 3-dehydrogenase (Shewanella sp. (strain W3-18-1)).